Reading from the N-terminus, the 139-residue chain is D-ribose pyranase (139 aa).

Catalysis depends on His-20, which acts as the Proton donor. Substrate contacts are provided by residues Asp-28, His-106, and Tyr-128–Asn-130.

It belongs to the RbsD / FucU family. RbsD subfamily. In terms of assembly, homodecamer.

It is found in the cytoplasm. The catalysed reaction is beta-D-ribopyranose = beta-D-ribofuranose. The protein operates within carbohydrate metabolism; D-ribose degradation; D-ribose 5-phosphate from beta-D-ribopyranose: step 1/2. Functionally, catalyzes the interconversion of beta-pyran and beta-furan forms of D-ribose. The sequence is that of D-ribose pyranase from Pectobacterium atrosepticum (strain SCRI 1043 / ATCC BAA-672) (Erwinia carotovora subsp. atroseptica).